Here is a 34-residue protein sequence, read N- to C-terminus: Delta-conotoxin AtVIA (34 aa).

A propeptide spanning residues 1–4 is cleaved from the precursor; sequence LSKK. Pyrrolidone carboxylic acid is present on glutamine 5. 3 disulfide bridges follow: cysteine 6/cysteine 23, cysteine 13/cysteine 27, and cysteine 22/cysteine 31.

In terms of tissue distribution, expressed by the venom duct.

The protein localises to the secreted. Its function is as follows. Probable toxin from a worm-hunter cone snail. Shows an excitatory activity on a majority of mouse lumbar dorsal root ganglion (DRG) neurons. Very probably inhibits the inactivation of voltage-gated sodium channels (Nav). The sequence is that of Delta-conotoxin AtVIA from Conus ateralbus (Cone snail).